The following is a 280-amino-acid chain: Golgi phosphoprotein 3-like A (280 aa).

A disordered region spans residues 1–32; it reads MTTLIRRGRRAEEGQERRADSEDSIKDKDEEE. Residues 10 to 32 are compositionally biased toward basic and acidic residues; that stretch reads RAEEGQERRADSEDSIKDKDEEE. 4 residues coordinate a 1,2-diacyl-sn-glycero-3-phospho-(1D-myo-inositol 4-phosphate): Trp-62, Arg-71, Arg-152, and Arg-155. Residues 171–182 are beta-hairpin required for oligomerization; it reads EKQNFLLFDMTT.

It belongs to the GOLPH3/VPS74 family. In terms of assembly, homooligomer.

Its subcellular location is the golgi apparatus. It localises to the golgi stack membrane. The protein resides in the trans-Golgi network membrane. In terms of biological role, phosphatidylinositol-4-phosphate-binding protein that may play a role in the process of vesicle budding at the Golgi and anterograde transport to the plasma membrane. This chain is Golgi phosphoprotein 3-like A (golph3l-a), found in Xenopus laevis (African clawed frog).